The sequence spans 248 residues: Triosephosphate isomerase (248 aa).

9–11 serves as a coordination point for substrate; it reads NWK. The active-site Electrophile is the His94. Residue Glu164 is the Proton acceptor of the active site. Substrate-binding positions include Gly170, Ser209, and 230-231; that span reads GG.

Belongs to the triosephosphate isomerase family. Homodimer.

Its subcellular location is the cytoplasm. The enzyme catalyses D-glyceraldehyde 3-phosphate = dihydroxyacetone phosphate. It functions in the pathway carbohydrate biosynthesis; gluconeogenesis. It participates in carbohydrate degradation; glycolysis; D-glyceraldehyde 3-phosphate from glycerone phosphate: step 1/1. Functionally, involved in the gluconeogenesis. Catalyzes stereospecifically the conversion of dihydroxyacetone phosphate (DHAP) to D-glyceraldehyde-3-phosphate (G3P). This chain is Triosephosphate isomerase, found in Hahella chejuensis (strain KCTC 2396).